Here is a 285-residue protein sequence, read N- to C-terminus: Chlorite dismutase (285 aa).

An N-terminal signal peptide occupies residues 1-38 (MKVRCVSLVAAGLLTIAGSAIGQPAPAPMPAMAPAAKP). Glu-105 is a Ca(2+) binding site. His-205 contacts heme. Arg-218 functions as the Proton acceptor in the catalytic mechanism. Positions 227 and 266 each coordinate Ca(2+).

The protein belongs to the chlorite dismutase family. In terms of assembly, homopentamer. The cofactor is heme b.

The protein resides in the periplasm. The catalysed reaction is chloride + O2 = chlorite. Functionally, catalyzes the heme-dependent decomposition of chlorite to O(2) and chloride with high efficiency and specificity. Used to detoxify chlorite, a by-product of the reduction of perchlorate, a primarily anthropogenic pollutant, in perchlorate-respiring bacteria. This is Chlorite dismutase (cld) from Ideonella dechloratans.